We begin with the raw amino-acid sequence, 321 residues long: Ras association domain-containing protein 4 (321 aa).

The disordered stretch occupies residues histidine 79–alanine 159. A compositionally biased stretch (polar residues) spans serine 98–serine 110. Residue serine 141 is modified to Phosphoserine. Positions tyrosine 174–leucine 262 constitute a Ras-associating domain. An SARAH domain is found at valine 270–leucine 317.

In terms of assembly, interacts directly with activated KRAS in a GTP-dependent manner. Widely expressed. Frequently down-regulated in tumor cell lines.

In terms of biological role, potential tumor suppressor. May act as a KRAS effector protein. May promote apoptosis and cell cycle arrest. The polypeptide is Ras association domain-containing protein 4 (RASSF4) (Homo sapiens (Human)).